Consider the following 546-residue polypeptide: MADAAMSGEEKEEDGGKRTTAATPAETLGFYEPSDGSRVETKKRSLSDLSLLRFISAELTRGYFLENNEAKYKERREKVYTCLRIPRELEKLMVFGFFLCLDAFLYVFTLLPLRVLLALIRFLTLPCCGLSDGRVLQPAQVCDVLKGVILVICYFIMHYVDYSMMYHLIRGQSVIKLYIIYNMLEVADRLFSSFGQDILDALYWTATEPKERKRAHLGVIPHFFMAVLYVILHAILILVQATTLNVAFNSHNKSLLTIMMSNNFVEIKGSVFKKFEKNNLFQMSNSDIKERFTNYVLLLIVCLRNMEQFSWNPDHLWVLFPDVCMVIASEIAVDVVKHAFITKFNDITADVYSEYRASLAFELVSSRQKNACTDYSDSVSRRMGFIPLPLAVLLIRVVTSSVKVQGILAYSCVVLFYFGLITLKVLNSIVLLGKSCQYIKDANMEEKLFQPPTCQPGKTPKKAQNKSKPNQGHPPDETANTSVTSQPTKAASTAQLLVESNSDKLLTTPDAEEKDISGDNSELKQKQADKDLLDIDRFTICGNRID.

The disordered stretch occupies residues 1 to 37; that stretch reads MADAAMSGEEKEEDGGKRTTAATPAETLGFYEPSDGS. 6 helical membrane-spanning segments follow: residues 92–112, 149–169, 219–239, 316–336, 384–404, and 413–433; these read LMVF…TLLP, ILVI…YHLI, VIPH…LILV, LWVL…VDVV, GFIP…SVKV, and VVLF…VLLG. Positions 449–529 are disordered; sequence FQPPTCQPGK…NSELKQKQAD (81 aa). Over residues 478–505 the composition is skewed to polar residues; that stretch reads TANTSVTSQPTKAASTAQLLVESNSDKL. The span at 514–529 shows a compositional bias: basic and acidic residues; it reads KDISGDNSELKQKQAD.

The protein belongs to the TAPT1 family.

It localises to the cytoplasm. The protein localises to the cytoskeleton. Its subcellular location is the microtubule organizing center. It is found in the centrosome. The protein resides in the cilium basal body. It localises to the membrane. Plays a role in primary cilia formation. Involved in cartilage and bone development. May play a role in the differentiation of cranial neural crest cells. May act as a downstream effector of hoxc8 during development. In Xenopus laevis (African clawed frog), this protein is Transmembrane anterior posterior transformation protein 1 homolog (tapt1).